Reading from the N-terminus, the 335-residue chain is MNFKKLPKIELHCHLDGSLRVDTILDIAKKDNIHLPSYNKKELINYVSIMDDCNSLDEYLNKFFIPNKVMQTKENLKRIAFELLEDVAADNVKYIEVRFAPLLHVEKGLNIEEIIESVLEGIKEAEKLYDIKGNLILGCMRNMDIPSAFEVVKKGAKFIGKGVVAIDLCAGEEPHFPGKYIEVLKLAKECGYRITIHAGEAGVGENVLEAINLLNAERIGHGIYIKDCAEAYKLVKEKNIPLEVCPTSNLHTKAFESYETHPFMDFLKDGIKVTINTDNMTVSNTTITKELEMLNKFCGLSIGDYKILYLNAVEASFASSETKEVLKSYVKEITA.

Zn(2+)-binding residues include His12 and His14. Residues His14 and Asp16 each contribute to the substrate site. A Zn(2+)-binding site is contributed by His197. The Proton donor role is filled by Glu200. Asp278 provides a ligand contact to Zn(2+).

The protein belongs to the metallo-dependent hydrolases superfamily. Adenosine and AMP deaminases family. Adenosine deaminase subfamily. Zn(2+) serves as cofactor.

The enzyme catalyses adenosine + H2O + H(+) = inosine + NH4(+). It carries out the reaction 2'-deoxyadenosine + H2O + H(+) = 2'-deoxyinosine + NH4(+). Catalyzes the hydrolytic deamination of adenosine and 2-deoxyadenosine. This Clostridium botulinum (strain Loch Maree / Type A3) protein is Adenosine deaminase.